An 828-amino-acid polypeptide reads, in one-letter code: ADP-ribosylation factor GTPase-activating protein AGD1 (828 aa).

Residues 1-225 (MHFAKLDDSP…INQVLAYAHQ (225 aa)) enclose the BAR domain. Positions 225–255 (QSRECANYEMASLNERMQEYQRQVDRETRNS) form a coiled coil. A disordered region spans residues 247–268 (QVDRETRNSCVSPTGDGMRHNS). The PH domain maps to 288-425 (QTIRQGYLSK…WIEKITGVIA (138 aa)). At Ser-441 the chain carries Phosphoserine. The 146-residue stretch at 498–643 (EKPIDVLTRV…IFVRKAIDSQ (146 aa)) folds into the Arf-GAP domain. Residues 513-536 (CADCGAPEPDWASLNLGVLICIEC) form a C4-type zinc finger. Residues 590-600 (TSSASRSSGTP) show a composition bias toward low complexity. Residues 590–611 (TSSASRSSGTPKSDRPRKLLVR) form a disordered region. 2 ANK repeats span residues 735–764 (NDCS…KINA) and 768–797 (KGRT…DPNA).

In terms of tissue distribution, expressed in roots, but not in hypocotyls or cotyledons. Low levels detected in leaf and shoot apical meristems and in siliques.

Its subcellular location is the endosome. Its function is as follows. Probable GTPase-activating protein. Regulator of membrane trafficking. Required for maintaining a straight growth of root hairs. The sequence is that of ADP-ribosylation factor GTPase-activating protein AGD1 (AGD1) from Arabidopsis thaliana (Mouse-ear cress).